Here is a 257-residue protein sequence, read N- to C-terminus: Type I iodothyronine deiodinase (257 aa).

At 1-12 the chain is on the extracellular side; the sequence is MGLPGLGLLLKR. A helical; Signal-anchor for type III membrane protein transmembrane segment spans residues 13-33; the sequence is FGVLVRVALKVAVGKVLLTLW. At 34–257 the chain is on the cytoplasmic side; the sequence is PSAIRPHLLA…CRSSAQSPRL (224 aa). The active site involves Sec-126. Sec-126 is a non-standard amino acid (selenocysteine).

Belongs to the iodothyronine deiodinase family. Predominantly monomer. Can form homodimers but homodimerization is not essential for enzyme activity. As to expression, liver specific.

Its subcellular location is the cell membrane. It localises to the endoplasmic reticulum membrane. The protein localises to the basolateral cell membrane. The enzyme catalyses 3,3',5-triiodo-L-thyronine + iodide + A + H(+) = L-thyroxine + AH2. The catalysed reaction is 3,3',5'-triiodo-L-thyronine + iodide + A + H(+) = L-thyroxine + AH2. It carries out the reaction 3,3'-diiodo-L-thyronine + iodide + A + H(+) = 3,3',5'-triiodo-L-thyronine + AH2. It catalyses the reaction 3,3'-diiodo-L-thyronine + iodide + A + H(+) = 3,3',5-triiodo-L-thyronine + AH2. The enzyme catalyses 3'-iodo-L-thyronine + iodide + A + H(+) = 3',5'-diiodo-L-thyronine + AH2. The catalysed reaction is 3-iodo-L-thyronine + iodide + A + H(+) = 3,5-diiodo-L-thyronine + AH2. It carries out the reaction 3-iodo-L-thyronine + iodide + A + H(+) = 3,3'-diiodo-L-thyronine + AH2. It catalyses the reaction 3,3'-diiodothyronamine + iodide + A + H(+) = 3,3',5'-triiodothyronamine + AH2. The enzyme catalyses 3'-iodothyronamine + iodide + A + H(+) = 3',5'-diiodothyronamine + AH2. The catalysed reaction is 3-iodothyronamine + iodide + A + H(+) = 3,3'-diiodothyronamine + AH2. It carries out the reaction 3,3'-diiodothyronamine + iodide + A + H(+) = 3,3',5-triiodothyronamine + AH2. It catalyses the reaction 3-iodothyronamine + iodide + A + H(+) = 3,5-diiodothyronamine + AH2. The enzyme catalyses 3,3'-diiodo-L-thyronine sulfate + iodide + A + H(+) = 3,3',5'-triiodo-L-thyronine sulfate + AH2. The catalysed reaction is 3,3',5'-triiodo-L-thyronine sulfate + iodide + A + H(+) = L-thyroxine sulfate + AH2. It carries out the reaction 3,3'-diiodo-L-thyronine sulfate + iodide + A + H(+) = 3,3',5-triiodo-L-thyronine sulfate + AH2. Its function is as follows. Plays a crucial role in the metabolism of thyroid hormones (TH) and has specific roles in TH activation and inactivation by deiodination. Catalyzes the deiodination of L-thyroxine (T4) to 3,5,3'-triiodothyronine (T3) and 3',5'-diiodothyronine (3',5'-T2) to 3'-monoiodothyronine (3'-T1) via outer-ring deiodination (ORD). Catalyzes the deiodination of T4 to 3,3',5'-triiodothyronine (rT3), T3 to 3,3'-diiodothyronine (3,3'-T2), 3,5-diiodothyronine (3,5-T2) to 3-monoiodothyronine (3-T1) and 3,3'-T2 to 3-T1 via inner-ring deiodination (IRD). Catalyzes the deiodination of rT3 to 3,3'-T2 via ORD. Catalyzes the phenolic ring deiodinations of 3,3',5'-triiodothyronamine, 3',5'-diiodothyronamine and 3,3'-diiodothyronamine as well as tyrosyl ring deiodinations of 3,5,3'-triiodothyronamine and 3,5-diiodothyronamine. Catalyzes the deiodination of L-thyroxine sulfate and 3,3',5-triiodo-L-thyronine sulfate via IRD and of 3,3',5'-triiodo-L-thyronine sulfate via ORD. The sequence is that of Type I iodothyronine deiodinase (DIO1) from Suncus murinus (Asian house shrew).